We begin with the raw amino-acid sequence, 335 residues long: MEKHGPPEHAAYPIPQADYQGSQGPYPGPQGPYPGPQGPYAGPQGPYPGPQGPYAGPQGPYPGPQPGYPVPPGSYAGGDPSGFPVQHQPAYNHPGGPGGTPWMQAPPPPLDCPPGLEYLTQIDQILVHQQIELLEVLTGFETNNKYEIKNSLGQRVYFAVEDTDCCTRNCCGASRPFTLRILDNMGREVMTLERPLRCSSCCFPCCLQEIEIQAPPGVPVGYVIQTWHPCLPKFTLQNEKRQDVLKVVGPCVVCSCCSDIDFELKSLDEESVVGKISKQWSGFVREAFTDADNFGIQFPLDLDVKMKAVMLGACFLIDFMFFERTGNEEQRSGVW.

The segment at 1-101 (MEKHGPPEHA…NHPGGPGGTP (101 aa)) is proline-rich domain (PRD). A disordered region spans residues 1 to 102 (MEKHGPPEHA…HPGGPGGTPW (102 aa)). Residues 1-305 (MEKHGPPEHA…IQFPLDLDVK (305 aa)) lie on the Cytoplasmic side of the membrane. 6 repeat units span residues 23-29 (QGPYPGP), 30-36 (QGPYPGP), 37-43 (QGPYAGP), 44-50 (QGPYPGP), 51-57 (QGPYAGP), and 58-64 (QGPYPGP). Residues 23–71 (QGPYPGPQGPYPGPQGPYAGPQGPYPGPQGPYAGPQGPYPGPQPGYPVP) form a 7 X 7 AA tandem repeats of Q-G-P-Y-[AP]-G-P region. Residues 26–37 (YPGPQGPYPGPQ) are compositionally biased toward pro residues. Pro residues predominate over residues 59 to 72 (GPYPGPQPGYPVPP). An SH3-binding 1 motif is present at residues 64-72 (PQPGYPVPP). A 7; approximate repeat occupies 65-71 (QPGYPVP). Position 91 is a phosphotyrosine; by ABL (Y91). The short motif at 101–109 (PWMQAPPPP) is the SH3-binding 2 element. T178 is modified (phosphothreonine; by PKC/PRKCD). Residues C201, C202, C205, and C206 are each lipidated (S-palmitoyl cysteine). The Nuclear localization signal signature appears at 274–283 (GKISKQWSGF). The chain crosses the membrane as a helical span at residues 306-322 (MKAVMLGACFLIDFMFF). At 323–335 (ERTGNEEQRSGVW) the chain is on the extracellular side.

It belongs to the phospholipid scramblase family. In terms of assembly, forms homooligomers in the presence of calcium. Interacts with ABL. Interacts with RELT, RELL1 and RELL2. Interacts with OXSR1 in the presence of RELT. Interacts with OCLN, TOP2A and TOP2B. Interacts with TRPC1, TRPC4 and TRPC5. Interacts with ILDR1. Ca(2+) is required as a cofactor. It depends on Mg(2+) as a cofactor. The cofactor is Zn(2+). Phosphorylated on tyrosine residues. Phosphorylated by OXSR1 in the presence of RELT. Phosphorylation at Thr-178 by PKC/PKCD increases its phospholipid scramblase activity during both cell stimulation and apoptosis. Post-translationally, palmitoylation is required for its phospholipid scramblase activity. Palmitoylation regulates its localization to the cell membrane or the nucleus; trafficking to the cell membrane is dependent upon palmitoylation whereas in the absence of palmitoylation, localizes to the nucleus.

The protein localises to the cell membrane. The protein resides in the nucleus. It is found in the cytoplasm. It localises to the perinuclear region. It carries out the reaction a 1,2-diacyl-sn-glycero-3-phosphocholine(in) = a 1,2-diacyl-sn-glycero-3-phosphocholine(out). The catalysed reaction is a 1,2-diacyl-sn-glycero-3-phosphoethanolamine(in) = a 1,2-diacyl-sn-glycero-3-phosphoethanolamine(out). It catalyses the reaction a 1,2-diacyl-sn-glycero-3-phospho-L-serine(in) = a 1,2-diacyl-sn-glycero-3-phospho-L-serine(out). Catalyzes calcium-induced ATP-independent rapid bidirectional and non-specific distribution of phospholipids (lipid scrambling or lipid flip-flop) between the inner and outer leaflet of the plasma membrane resulting in collapse of the phospholipid asymmetry which leads to phosphatidylserine externalization on the cell surface. Mediates calcium-dependent phosphatidylserine externalization and apoptosis in neurons via its association with TRPC5. Also exhibits magnesium-dependent nuclease activity against double-stranded DNA and RNA but not single-stranded DNA and can enhance DNA decatenation mediated by TOP2A. Negatively regulates FcR-mediated phagocytosis in differentiated macrophages. May contribute to cytokine-regulated cell proliferation and differentiation. In Rattus norvegicus (Rat), this protein is Phospholipid scramblase 1 (Plscr1).